A 318-amino-acid chain; its full sequence is Taste receptor type 2 member 7 (318 aa).

At 1 to 9 (MTDKVQTTL) the chain is on the extracellular side. Residues 10–30 (LFLAVGEFSVGILGNAFIGLV) traverse the membrane as a helical segment. The Cytoplasmic segment spans residues 31–55 (NCMDWIKKRKIASIDLILTSLAISR). The chain crosses the membrane as a helical span at residues 56–76 (ICLLCVILLDCFILVLYPDVY). Over 77–94 (ATGKEMRIIDFFWILTNH) the chain is Extracellular. The chain crosses the membrane as a helical span at residues 95-115 (LSIWFATCLSIYYFFKIANFF). Topologically, residues 116–128 (HPLFLWMKWRIDR) are cytoplasmic. The helical transmembrane segment at 129 to 149 (VISWILLGCMVLSVFISLPAT) threads the bilayer. The Extracellular segment spans residues 150–187 (ENLNADFRFCVKAKRKTNLTWSCRVNKTQHASIKLLLN). Asn167 and Asn175 each carry an N-linked (GlcNAc...) asparagine glycan. Residues 188–208 (LATLLPFCVCLMSFFLLILSL) form a helical membrane-spanning segment. The Cytoplasmic segment spans residues 209–235 (RRHIRRMQLSATGCRDPSTEAHVRALK). A helical transmembrane segment spans residues 236–256 (AVISFLLLFIAYYLSFLIATS). Topologically, residues 257–266 (SYFMPETELA) are extracellular. The chain crosses the membrane as a helical span at residues 267–287 (VIFGESIALIYPSSHSFILIL). Residues 288 to 318 (GNNKLRHASLKVIWKVMSILKGRKFQQHKQI) are Cytoplasmic-facing.

Belongs to the G-protein coupled receptor T2R family.

It is found in the membrane. Its function is as follows. Gustducin-coupled receptor implicated in the perception of bitter compounds in the oral cavity and the gastrointestinal tract. Signals through PLCB2 and the calcium-regulated cation channel TRPM5. This Pongo pygmaeus (Bornean orangutan) protein is Taste receptor type 2 member 7 (TAS2R7).